The following is a 217-amino-acid chain: Probable GTP-binding protein EngB (217 aa).

Residues 33–217 (GPTEIAFAGR…RAAIELAVTR (185 aa)) enclose the EngB-type G domain. GTP is bound by residues 41–48 (GRSNVGKS), 68–72 (GRTQE), 95–98 (DMPG), 162–165 (TKTD), and 196–198 (TSS). 2 residues coordinate Mg(2+): serine 48 and threonine 70.

This sequence belongs to the TRAFAC class TrmE-Era-EngA-EngB-Septin-like GTPase superfamily. EngB GTPase family. It depends on Mg(2+) as a cofactor.

Necessary for normal cell division and for the maintenance of normal septation. This is Probable GTP-binding protein EngB from Rhizobium meliloti (strain 1021) (Ensifer meliloti).